We begin with the raw amino-acid sequence, 168 residues long: MSRSRINGNFIDKTFSIVANILLRIIPTTSGEKEAFTYYRDGMSAQSEGNYAEALQNYYEATRLEIDPYDRSYILYNIGLIHTSNGEHTKALEYYSRALERNPFLPQAFNNMAVICHYRGEQAIRQGDSEIAEAWSDQAAEYWKQAIALTPGNYIEAHNWLKITGRFE.

TPR repeat units lie at residues 35–68, 72–105, and 120–153; these read AFTY…EIDP, SYIL…NPFL, and GEQA…TPGN.

It belongs to the Ycf3 family.

It is found in the plastid. The protein localises to the chloroplast thylakoid membrane. Its function is as follows. Essential for the assembly of the photosystem I (PSI) complex. May act as a chaperone-like factor to guide the assembly of the PSI subunits. This chain is Photosystem I assembly protein Ycf3, found in Buxus microphylla (Littleleaf boxwood).